Consider the following 495-residue polypeptide: Cytochrome P450 710A1 (495 aa).

The helical transmembrane segment at 5–25 (VSIFASLAPYLISAFLLFLLV) threads the bilayer. Position 434 (Cys434) interacts with heme.

The protein belongs to the cytochrome P450 family. The cofactor is heme. Expressed in the vascular tissues of roots, shoots and leaves. Expressed in root tips and sepals. Very low expression in stems and siliques.

The protein localises to the membrane. It carries out the reaction 5-dehydroepisterol + NADPH + O2 + H(+) = ergosta-5,7,22,24(28)-tetraen-3beta-ol + NADP(+) + 2 H2O. It functions in the pathway steroid biosynthesis; sterol biosynthesis. In terms of biological role, required to form the C-22 double bond in the sterol side chain. Possesses in vitro C-22 desaturase activity toward beta-sitosterol and produces stigmasterol. No activity with campesterol. The chain is Cytochrome P450 710A1 from Arabidopsis thaliana (Mouse-ear cress).